A 363-amino-acid polypeptide reads, in one-letter code: S-adenosylmethionine:tRNA ribosyltransferase-isomerase (363 aa).

This sequence belongs to the QueA family. As to quaternary structure, monomer.

It is found in the cytoplasm. The enzyme catalyses 7-aminomethyl-7-carbaguanosine(34) in tRNA + S-adenosyl-L-methionine = epoxyqueuosine(34) in tRNA + adenine + L-methionine + 2 H(+). The protein operates within tRNA modification; tRNA-queuosine biosynthesis. Functionally, transfers and isomerizes the ribose moiety from AdoMet to the 7-aminomethyl group of 7-deazaguanine (preQ1-tRNA) to give epoxyqueuosine (oQ-tRNA). The polypeptide is S-adenosylmethionine:tRNA ribosyltransferase-isomerase (Brucella melitensis biotype 2 (strain ATCC 23457)).